Here is a 533-residue protein sequence, read N- to C-terminus: Probable fucosyltransferase 5 (533 aa).

The Cytoplasmic segment spans residues 1-13; sequence MYQKFQISGKIVK. Residues 14 to 34 traverse the membrane as a helical; Signal-anchor for type II membrane protein segment; sequence TLGLKMKVLIAVSFGSLLFIL. Residues 35–533 are Lumenal-facing; the sequence is SYSNNFNNKL…YGGLKLYDEF (499 aa). 5 N-linked (GlcNAc...) asparagine glycosylation sites follow: Asn-202, Asn-227, Asn-374, Asn-396, and Asn-475.

It belongs to the glycosyltransferase 37 family. Expressed in roots, leaves, flowers and siliques.

It localises to the golgi apparatus. The protein localises to the golgi stack membrane. It participates in protein modification; protein glycosylation. Its function is as follows. May be involved in cell wall biosynthesis. May act as a fucosyltransferase. The polypeptide is Probable fucosyltransferase 5 (FUT5) (Arabidopsis thaliana (Mouse-ear cress)).